Consider the following 350-residue polypeptide: Heat-inducible transcription repressor HrcA (350 aa).

It belongs to the HrcA family.

Negative regulator of class I heat shock genes (grpE-dnaK-dnaJ and groELS operons). Prevents heat-shock induction of these operons. This is Heat-inducible transcription repressor HrcA from Xanthomonas oryzae pv. oryzae (strain KACC10331 / KXO85).